The following is a 335-amino-acid chain: MKTILAVETSCDETAVAIVNSEKQVLAQEILSQTEHKKRGGVIPEIASRAHMEHLSSLIKNSIEKSNLNFCNLDATAATSGPGLIGGLIVGTMMAKAIAHVTQKPFIAVNHLEAHVLVIRLLYEVKFPFLVLLISGGHCQFLIAQNVGKYIKLGETLDDSLGEAFDKVARMLGLSYPGGPLIEKLAKKGNGTRFKLPRAMRKRPGCNFSFSGIKTAVKNLVQELEMSEQDVCDVCASFQECISEILLDRVKNAVIMAESLNIKINDFVVTGGVAANNFLRKKLKKHINLNILFPPINLCTDNAVMVGWTGIEILQKDYIDSLNFAPRPRWELGSY.

His-111 and His-115 together coordinate Fe cation. Substrate-binding positions include 133-137 (LISGG), Asp-166, Gly-179, and Asn-276. Asp-301 serves as a coordination point for Fe cation.

Belongs to the KAE1 / TsaD family. It depends on Fe(2+) as a cofactor.

It is found in the cytoplasm. It catalyses the reaction L-threonylcarbamoyladenylate + adenosine(37) in tRNA = N(6)-L-threonylcarbamoyladenosine(37) in tRNA + AMP + H(+). Required for the formation of a threonylcarbamoyl group on adenosine at position 37 (t(6)A37) in tRNAs that read codons beginning with adenine. Is involved in the transfer of the threonylcarbamoyl moiety of threonylcarbamoyl-AMP (TC-AMP) to the N6 group of A37, together with TsaE and TsaB. TsaD likely plays a direct catalytic role in this reaction. This chain is tRNA N6-adenosine threonylcarbamoyltransferase, found in Wolbachia sp. subsp. Brugia malayi (strain TRS).